We begin with the raw amino-acid sequence, 750 residues long: Olfactomedin-like protein 2B (750 aa).

An N-terminal signal peptide occupies residues 1-22 (MAKPRLLVLYFALIVVPAWVSS). 2 coiled-coil regions span residues 40-68 (AEDETLQNEADNQENVLSQLLGDYDKVKA) and 179-213 (KLEEEVSKNLTKENEQIKEDMEEIRTEMNKRGKEN). 2 N-linked (GlcNAc...) asparagine glycosylation sites follow: Asn-187 and Asn-213. Disordered regions lie at residues 346–437 (TRRP…PPAV) and 452–484 (VPPTTVRTDSLGKDAPAGWGTTPASPTLSPEEE). Composition is skewed to polar residues over residues 354-384 (QGHSTAVTSDLNARTAPWSSALPQPSTSDPS) and 393-413 (PTLQTTSVSPDPTRESVLQPS). A compositionally biased stretch (low complexity) spans 416–430 (VPATTVAHTATQQPA). Residues 493–750 (RCKDTLSTIT…QVTYHVIFAY (258 aa)) form the Olfactomedin-like domain. Cys-494 and Cys-680 are oxidised to a cystine. N-linked (GlcNAc...) asparagine glycosylation occurs at Asn-695.

Homodimer. Binds to heparin and chondroitin sulfate E. In terms of processing, O-glycosylated and N-glycosylated.

It localises to the secreted. This Homo sapiens (Human) protein is Olfactomedin-like protein 2B (OLFML2B).